The primary structure comprises 275 residues: Translation initiation factor 2 subunit alpha (275 aa).

One can recognise an S1 motif domain in the interval 12–83 (GEFVVATVKN…EKGHIDLSLK (72 aa)).

This sequence belongs to the eIF-2-alpha family. As to quaternary structure, heterotrimer composed of an alpha, a beta and a gamma chain.

Its function is as follows. eIF-2 functions in the early steps of protein synthesis by forming a ternary complex with GTP and initiator tRNA. The chain is Translation initiation factor 2 subunit alpha from Thermococcus kodakarensis (strain ATCC BAA-918 / JCM 12380 / KOD1) (Pyrococcus kodakaraensis (strain KOD1)).